Reading from the N-terminus, the 683-residue chain is Synaptic vesicle glycoprotein 2B (683 aa).

The span at Met-1 to Tyr-10 shows a compositional bias: basic and acidic residues. The segment at Met-1–Asp-72 is disordered. The Cytoplasmic portion of the chain corresponds to Met-1–Thr-110. Ser-33 bears the Phosphoserine mark. Phosphothreonine is present on Thr-36. A helical transmembrane segment spans residues Leu-111 to Phe-131. The Extracellular portion of the chain corresponds to Ala-132–Gly-148. The chain crosses the membrane as a helical span at residues Met-149–Ala-169. Residues Asp-170 to Leu-182 lie on the Cytoplasmic side of the membrane. A helical membrane pass occupies residues Ala-183–Phe-203. Topologically, residues Cys-204–Arg-205 are extracellular. A helical membrane pass occupies residues Leu-206–Phe-226. At Leu-227–Ser-237 the chain is on the cytoplasmic side. The chain crosses the membrane as a helical span at residues Trp-238–Ile-258. Residues Pro-259–Arg-277 lie on the Extracellular side of the membrane. Residues Val-278–Pro-298 traverse the membrane as a helical segment. The Cytoplasmic portion of the chain corresponds to Glu-299–Thr-390. Residues Leu-391–Phe-411 form a helical membrane-spanning segment. The Extracellular portion of the chain corresponds to Pro-412–Asp-535. Tyr-423 is modified (phosphotyrosine). N-linked (GlcNAc...) asparagine glycans are attached at residues Asn-441, Asn-491, and Asn-516. Residues Phe-536–Ser-556 traverse the membrane as a helical segment. Over Ala-557–Arg-565 the chain is Cytoplasmic. The helical transmembrane segment at Leu-566–Gly-586 threads the bilayer. Residues Asn-587–Met-592 are Extracellular-facing. Residues Ile-593–Ile-613 traverse the membrane as a helical segment. At Thr-614–Ala-626 the chain is on the cytoplasmic side. Residues Phe-627 to Val-649 traverse the membrane as a helical segment. Topologically, residues Gly-650–Lys-653 are extracellular. The helical transmembrane segment at Val-654 to Leu-672 threads the bilayer. Over Arg-673 to Met-683 the chain is Cytoplasmic.

The protein belongs to the major facilitator superfamily. As to quaternary structure, interacts with SYT1 in a calcium-independent manner. Forms a complex with SYT1, syntaxin-1 and SNAP25. In terms of assembly, (Microbial infection) Interacts with C.botulinum neurotoxin type A1 and type A2 (BoNT/A, botA). Interaction is improved by glycosylation of SV2. (Microbial infection) Interacts with C.botulinum neurotoxin type D (BoNT/D, botD). As to quaternary structure, (Microbial infection) Interacts with C.botulinum neurotoxin type E (BoNT/E). Interaction requires glycosylation of SV2 proteins. In terms of assembly, (Microbial infection) Interacts with C.botulinum neurotoxin type F (BoNT/F). Interaction requires glycosylation of SV2 proteins. In terms of processing, N-glycosylated. Post-translationally, the N-terminal cytoplasmic domain is phosphorylated by CK1. In terms of tissue distribution, widely expressed throughout the brain. Specifically expressed by pinealocytes in the pineal gland. Also detected in testis (at protein level). Specifically expressed in neural tissues. Expressed in the spinal cord and in all brain regions with a stronger expression in hippocampus and cortex.

Its subcellular location is the cytoplasmic vesicle. The protein localises to the secretory vesicle. It localises to the synaptic vesicle membrane. It is found in the acrosome. In terms of biological role, probably plays a role in the control of regulated secretion in neural and endocrine cells. (Microbial infection) Receptor for C.botulinum neurotoxin type A (BoNT/A, botA); the toxin binds via extracellular loop 4. Restores uptake of BoNT/A in mouse and rat cells that are deleted for SV2 receptor. Glycosylation of SV2B is not essential for receptor activity, but enhances the interaction. Also serves as a receptor for the closely related C.botulinum neurotoxin type A2; glycosylation is not essential but enhances the interaction. Its function is as follows. (Microbial infection) Possible receptor for C.botulinum neurotoxin type D (BoNT/D, botD); BoNT/D does not bind to extracellular loop 4 as do BoNT/A and BoNT/E. Another group does not find a convincing interaction with SV2. Functionally, (Microbial infection) Receptor for C.botulinum neurotoxin type E (BoNT/E); the toxin probably binds via extracellular loop 4. Restores uptake of BoNT/E in mouse cells that are deleted for SV2 receptor. Glycosylation of SV2B is not essential for receptor activity, but enhances the interaction. In terms of biological role, (Microbial infection) Receptor for C.botulinum neurotoxin type F (BoNT/F); binding requires glycosylation of this protein. The chain is Synaptic vesicle glycoprotein 2B (Sv2b) from Rattus norvegicus (Rat).